The primary structure comprises 366 residues: tRNA/tmRNA (uracil-C(5))-methyltransferase (366 aa).

Residues glutamine 190, tyrosine 218, asparagine 223, glutamate 239, and aspartate 299 each coordinate S-adenosyl-L-methionine. Cysteine 324 serves as the catalytic Nucleophile. Residue glutamate 358 is the Proton acceptor of the active site.

The protein belongs to the class I-like SAM-binding methyltransferase superfamily. RNA M5U methyltransferase family. TrmA subfamily.

The enzyme catalyses uridine(54) in tRNA + S-adenosyl-L-methionine = 5-methyluridine(54) in tRNA + S-adenosyl-L-homocysteine + H(+). It catalyses the reaction uridine(341) in tmRNA + S-adenosyl-L-methionine = 5-methyluridine(341) in tmRNA + S-adenosyl-L-homocysteine + H(+). Functionally, dual-specificity methyltransferase that catalyzes the formation of 5-methyluridine at position 54 (m5U54) in all tRNAs, and that of position 341 (m5U341) in tmRNA (transfer-mRNA). The protein is tRNA/tmRNA (uracil-C(5))-methyltransferase of Enterobacter sp. (strain 638).